A 73-amino-acid polypeptide reads, in one-letter code: Large ribosomal subunit protein bL27c (73 aa).

This sequence belongs to the bacterial ribosomal protein bL27 family.

It localises to the plastid. The protein resides in the chloroplast. The polypeptide is Large ribosomal subunit protein bL27c (rpl27) (Haptolina hirta (Plankton alga)).